Here is an 828-residue protein sequence, read N- to C-terminus: DNA gyrase subunit A (828 aa).

One can recognise a Topo IIA-type catalytic domain in the interval 32-497 (LPDVRDGLKP…EVLSLEDEDL (466 aa)). The active-site O-(5'-phospho-DNA)-tyrosine intermediate is the Tyr-120. A GyrA-box motif is present at residues 524–530 (QKRGGRG).

Belongs to the type II topoisomerase GyrA/ParC subunit family. As to quaternary structure, heterotetramer, composed of two GyrA and two GyrB chains. In the heterotetramer, GyrA contains the active site tyrosine that forms a transient covalent intermediate with DNA, while GyrB binds cofactors and catalyzes ATP hydrolysis.

The protein localises to the cytoplasm. It catalyses the reaction ATP-dependent breakage, passage and rejoining of double-stranded DNA.. In terms of biological role, a type II topoisomerase that negatively supercoils closed circular double-stranded (ds) DNA in an ATP-dependent manner to modulate DNA topology and maintain chromosomes in an underwound state. Negative supercoiling favors strand separation, and DNA replication, transcription, recombination and repair, all of which involve strand separation. Also able to catalyze the interconversion of other topological isomers of dsDNA rings, including catenanes and knotted rings. Type II topoisomerases break and join 2 DNA strands simultaneously in an ATP-dependent manner. The sequence is that of DNA gyrase subunit A from Streptococcus pyogenes serotype M18 (strain MGAS8232).